A 1253-amino-acid polypeptide reads, in one-letter code: Cytoplasmic FMR1-interacting protein 1 (1253 aa).

A Phosphoserine modification is found at Ser-583. Thr-1234 is subject to Phosphothreonine.

The protein belongs to the CYFIP family. Component of the WAVE1 complex composed of ABI2, CYFIP1 or CYFIP2, BRK1, NCKAP1 and WASF1/WAVE1. Within the complex, a heterodimer containing NCKAP1 and CYFIP1 interacts with a heterotrimer formed by WAVE1, ABI2 and BRK1. Component of the CYFIP1-EIF4E-FMR1 complex which is composed of CYFIP, EIF4E and FMR1. Interacts with FMR1 but does not bind to related proteins FXR1 or FXR2. Interaction with EIF4E stimulates FMR1 binding. Component of the WAVE2 complex composed of ABI1, CYFIP1/SRA1, NCKAP1/NAP1 (NCKAP1l/HEM1 in hematopoietic cells) and WASF2/WAVE2. Interacts with the active GTP-bound form of RAC1. Interacts through its C-terminus with the C-terminus of DPYSL2/CRMP2 which is necessary for DPYSL2-induced axon outgrowth. Interacts with NYAP1, NYAP2 and MYO16. Interacts with TMEM108 (via N-terminus); the interaction associates TMEM108 with the WAVE1 complex.

Its subcellular location is the cytoplasm. It is found in the perinuclear region. The protein localises to the cell projection. It localises to the lamellipodium. The protein resides in the ruffle. Its subcellular location is the synapse. It is found in the synaptosome. Its function is as follows. Component of the CYFIP1-EIF4E-FMR1 complex which binds to the mRNA cap and mediates translational repression. In the CYFIP1-EIF4E-FMR1 complex this subunit is an adapter between EIF4E and FMR1. Promotes the translation repression activity of FMR1 in brain probably by mediating its association with EIF4E and mRNA. Regulates formation of membrane ruffles and lamellipodia. Plays a role in axon outgrowth. Binds to F-actin but not to RNA. Part of the WAVE complex that regulates actin filament reorganization via its interaction with the Arp2/3 complex. Actin remodeling activity is regulated by RAC1. Regulator of epithelial morphogenesis. As component of the WAVE1 complex, required for BDNF-NTRK2 endocytic trafficking and signaling from early endosomes. May act as an invasion suppressor in cancers. This Homo sapiens (Human) protein is Cytoplasmic FMR1-interacting protein 1.